We begin with the raw amino-acid sequence, 159 residues long: 2-C-methyl-D-erythritol 2,4-cyclodiphosphate synthase (159 aa).

A divalent metal cation contacts are provided by D8 and H10. Residues 8-10 and 34-35 each bind 4-CDP-2-C-methyl-D-erythritol 2-phosphate; these read DVH and HS. A divalent metal cation is bound at residue H42. 4-CDP-2-C-methyl-D-erythritol 2-phosphate-binding positions include 56-58, 100-106, 132-135, F139, and R142; these read DIG, AQAPKMA, and TTTE.

The protein belongs to the IspF family. As to quaternary structure, homotrimer. A divalent metal cation is required as a cofactor.

It catalyses the reaction 4-CDP-2-C-methyl-D-erythritol 2-phosphate = 2-C-methyl-D-erythritol 2,4-cyclic diphosphate + CMP. It functions in the pathway isoprenoid biosynthesis; isopentenyl diphosphate biosynthesis via DXP pathway; isopentenyl diphosphate from 1-deoxy-D-xylulose 5-phosphate: step 4/6. Its function is as follows. Involved in the biosynthesis of isopentenyl diphosphate (IPP) and dimethylallyl diphosphate (DMAPP), two major building blocks of isoprenoid compounds. Catalyzes the conversion of 4-diphosphocytidyl-2-C-methyl-D-erythritol 2-phosphate (CDP-ME2P) to 2-C-methyl-D-erythritol 2,4-cyclodiphosphate (ME-CPP) with a corresponding release of cytidine 5-monophosphate (CMP). In Marinobacter nauticus (strain ATCC 700491 / DSM 11845 / VT8) (Marinobacter aquaeolei), this protein is 2-C-methyl-D-erythritol 2,4-cyclodiphosphate synthase.